The primary structure comprises 237 residues: MQKKAELYRGKAKTVYSTENPDLLVLEFRNDTSALDGERIEQFDRKGMINNKFNHFIMTKLQEAGIPTQMEALLSDNEALVKNLDMVPVECVIRNRAAGSLVKRLGVEEGMILNPPLFDLFLKDDAKHDPMVNESYCETFGWVSQTHLARMRELTYRANEVLSKLFADAGLILVDFKLEFGLFKGEVVLGDEFSPDGARLWDKDTLNKMDKDRYRQSLGGLIEAYEEVANRLGVKLD.

This sequence belongs to the SAICAR synthetase family.

It catalyses the reaction 5-amino-1-(5-phospho-D-ribosyl)imidazole-4-carboxylate + L-aspartate + ATP = (2S)-2-[5-amino-1-(5-phospho-beta-D-ribosyl)imidazole-4-carboxamido]succinate + ADP + phosphate + 2 H(+). Its pathway is purine metabolism; IMP biosynthesis via de novo pathway; 5-amino-1-(5-phospho-D-ribosyl)imidazole-4-carboxamide from 5-amino-1-(5-phospho-D-ribosyl)imidazole-4-carboxylate: step 1/2. This chain is Phosphoribosylaminoimidazole-succinocarboxamide synthase, found in Erwinia tasmaniensis (strain DSM 17950 / CFBP 7177 / CIP 109463 / NCPPB 4357 / Et1/99).